Consider the following 404-residue polypeptide: Tryptophan synthase beta chain (404 aa).

K91 is modified (N6-(pyridoxal phosphate)lysine).

It belongs to the TrpB family. Tetramer of two alpha and two beta chains. Pyridoxal 5'-phosphate serves as cofactor.

It carries out the reaction (1S,2R)-1-C-(indol-3-yl)glycerol 3-phosphate + L-serine = D-glyceraldehyde 3-phosphate + L-tryptophan + H2O. It functions in the pathway amino-acid biosynthesis; L-tryptophan biosynthesis; L-tryptophan from chorismate: step 5/5. The beta subunit is responsible for the synthesis of L-tryptophan from indole and L-serine. The polypeptide is Tryptophan synthase beta chain (Clavibacter michiganensis subsp. michiganensis (strain NCPPB 382)).